Consider the following 402-residue polypeptide: D-mannonate dehydratase (402 aa).

Asn37 and His122 together coordinate substrate. Tyr159 (proton donor/acceptor) is an active-site residue. Residue Asp210 participates in Mg(2+) binding. His212 functions as the Proton donor/acceptor in the catalytic mechanism. 2 residues coordinate Mg(2+): Glu236 and Glu262. Substrate contacts are provided by Glu262, Arg283, His312, Asp316, and Glu339.

It belongs to the mandelate racemase/muconate lactonizing enzyme family. GalD subfamily. In terms of assembly, homotetramer. Requires Mg(2+) as cofactor.

The catalysed reaction is D-mannonate = 2-dehydro-3-deoxy-D-gluconate + H2O. Its pathway is carbohydrate metabolism; pentose and glucuronate interconversion. In terms of biological role, catalyzes the dehydration of D-mannonate. Has no detectable activity with a panel of 70 other acid sugars (in vitro). This Novosphingobium aromaticivorans (strain ATCC 700278 / DSM 12444 / CCUG 56034 / CIP 105152 / NBRC 16084 / F199) protein is D-mannonate dehydratase (manD).